The sequence spans 317 residues: Transaldolase (317 aa).

Lys131 (schiff-base intermediate with substrate) is an active-site residue.

Belongs to the transaldolase family. Type 1 subfamily. Homodimer.

The protein localises to the cytoplasm. The catalysed reaction is D-sedoheptulose 7-phosphate + D-glyceraldehyde 3-phosphate = D-erythrose 4-phosphate + beta-D-fructose 6-phosphate. The protein operates within carbohydrate degradation; pentose phosphate pathway; D-glyceraldehyde 3-phosphate and beta-D-fructose 6-phosphate from D-ribose 5-phosphate and D-xylulose 5-phosphate (non-oxidative stage): step 2/3. Functionally, transaldolase is important for the balance of metabolites in the pentose-phosphate pathway. This is Transaldolase from Baumannia cicadellinicola subsp. Homalodisca coagulata.